The primary structure comprises 322 residues: MVVIMLNYDDIKIIDEIYSEGYLFAQYGIYIKKKFKQKIFKIPVDIGLGCPHKKNGGCIFCPEMGRPISVKYCSAKIPLKEQIKKQMENQKKKGFKKFYIYFYPGTNTYAPAEKLKEIWDFSLSYKEVIGLSIGTRPDCLEKEKLDILAEYVENGYDIWIDLGVQSMHQKTLEILNRGHDVSDIIKAIKDCHKRGIKVCGHVILGLPGESWKEMMETAKILSLLEIEAVKIYPLVVVKGTKLEEMYWKGEYRTLDENQYISLVCDFLEHLSPYVLIQRLSKDKVPESIKVSPEWYLGRLKIMNKVSEILKKRGTKQGARFFR.

The 253-residue stretch at 34 to 286 (KFKQKIFKIP…QRLSKDKVPE (253 aa)) folds into the Radical SAM core domain. [4Fe-4S] cluster contacts are provided by Cys-50, Cys-58, and Cys-61.

This sequence belongs to the radical SAM superfamily. The cofactor is [4Fe-4S] cluster.

This is an uncharacterized protein from Methanocaldococcus jannaschii (strain ATCC 43067 / DSM 2661 / JAL-1 / JCM 10045 / NBRC 100440) (Methanococcus jannaschii).